We begin with the raw amino-acid sequence, 181 residues long: ECF RNA polymerase sigma factor EcfG (181 aa).

Residues 15-77 form a sigma-70 factor domain-2 region; the sequence is VPSLRAFAIS…FRSDYRKRRR (63 aa). Positions 103–155 are sigma-70 factor domain-4; it reads EEFRAALDKLPQDQREALILVGASGFSYEDAAAICGCAVGTIKSRVNRARSKL.

The protein belongs to the sigma-70 factor family. ECF subfamily.

In terms of biological role, sigma factors are initiation factors that promote the attachment of RNA polymerase to specific initiation sites and are then released. Regulates expression of hpnP under a variety of stresses, including high temperature, pH stress, and presence of nonionic osmolytes. The protein is ECF RNA polymerase sigma factor EcfG of Rhodopseudomonas palustris (strain TIE-1).